The sequence spans 239 residues: Large ribosomal subunit protein uL2 (239 aa).

The tract at residues 200-239 (VNHPHGGKEHHIGRPSTVSRRAPPGRKVGHIAARRTGRRK) is disordered. Residues 222 to 239 (PPGRKVGHIAARRTGRRK) are compositionally biased toward basic residues.

Belongs to the universal ribosomal protein uL2 family. As to quaternary structure, part of the 50S ribosomal subunit. Forms a bridge to the 30S subunit in the 70S ribosome.

In terms of biological role, one of the primary rRNA binding proteins. Required for association of the 30S and 50S subunits to form the 70S ribosome, for tRNA binding and peptide bond formation. It has been suggested to have peptidyltransferase activity; this is somewhat controversial. Makes several contacts with the 16S rRNA in the 70S ribosome. The sequence is that of Large ribosomal subunit protein uL2 from Thermococcus onnurineus (strain NA1).